We begin with the raw amino-acid sequence, 130 residues long: Protein Wnt-9 (130 aa).

Serine 1 carries the O-palmitoleoyl serine; by PORCN lipid modification. A disordered region spans residues 41 to 69 (AGERTIARSRRRPREQRGQRRPKVSDGAL). The span at 47 to 62 (ARSRRRPREQRGQRRP) shows a compositional bias: basic residues. Asparagine 97 is a glycosylation site (N-linked (GlcNAc...) asparagine). Residues cysteine 100 and cysteine 111 are joined by a disulfide bond.

This sequence belongs to the Wnt family. Palmitoleoylation is required for efficient binding to frizzled receptors. Depalmitoleoylation leads to Wnt signaling pathway inhibition.

The protein localises to the secreted. Its subcellular location is the extracellular space. The protein resides in the extracellular matrix. Functionally, ligand for members of the frizzled family of seven transmembrane receptors. Probable developmental protein. May be a signaling molecule which affects the development of discrete regions of tissues. Is likely to signal over only few cell diameters. The protein is Protein Wnt-9 (WNT-9) of Eptatretus stoutii (Pacific hagfish).